Consider the following 1449-residue polypeptide: Disease resistance protein RPP5 (1449 aa).

The TIR domain maps to R10 to L178. E85 is an active-site residue. Residues E192–V446 enclose the NB-ARC domain. LRR repeat units follow at residues M549–P573, L574–A595, Y597–L618, G619–R642, L644–A665, M687–P710, K712–V732, E733–L755, G756–I779, A802–L825, E826–C849, L915–T939, L941–L962, Q963–L985, S986–W1011, A1028–L1052, Q1053–S1077, S1096–F1119, and T1120–L1143.

Interacts with RSH1.

It catalyses the reaction NAD(+) + H2O = ADP-D-ribose + nicotinamide + H(+). TIR-NB-LRR receptor-like protein that confers resistance to the pathogen Hyaloperonospora arabidopsis isolate Noco2 (downy mildew disease). Confers resistance to H.arabidopsis isolates Emoy2, Emwa1 and Noco2. The chain is Disease resistance protein RPP5 from Arabidopsis thaliana (Mouse-ear cress).